The primary structure comprises 371 residues: Choline kinase B1 (371 aa).

Belongs to the choline/ethanolamine kinase family. The cofactor is Mg(2+).

It catalyses the reaction choline + ATP = phosphocholine + ADP + H(+). The chain is Choline kinase B1 (ckb-1) from Caenorhabditis elegans.